The sequence spans 177 residues: MAGRDRDPLVVGRVVGDVLDPFVRTTNLRVSFGNRNVSNGCELKPSMVTHQPRVEVGGNEMRTFYTLVMVDPDAPSPSDPNLREYLHWLVTDIPGTTGASFGQEVMCYESPRPSMGIHRFVFVLFQQLGRQTVYAPGWRQNFNTRDFAELYNLGPPVAAVYFNCQREAGSGGRRMYP.

It belongs to the phosphatidylethanolamine-binding protein family. As to expression, expressed in leaves but not in shoot apex.

Functionally, involved in the regulation of vernalization and of flowering time; this process in essential for flowering in cv. Bd29-1 but seems do not occur in cv. Bd21. This chain is Protein VERNALIZATION 3, found in Brachypodium distachyon (Purple false brome).